The primary structure comprises 259 residues: MSSRKLTLGVSLKMYFGYQQTLDWCQKIHEIAEQHPLASLPSARLFVLPAFPTLAPVVQRFAQSPVHVGAQDLHWTDNGAFTGEVSGTMLHEMGCRYVEIGHAERRRYFGETDEHFALKTAAAWRNGLTPVLCVGEEQRGSTQQAIDTCQAQLAAALNLAQKQQLTGDLVLAYEPQWAIGSTEPAPTAYISEVCQALKQHLPTQAGVREGRIIYGGSAGPGLLSQLGDAVDGLFLGRFAHDPAAFNAIMDEAFTLSSQA.

His-102 functions as the Electrophile in the catalytic mechanism. Glu-174 acts as the Proton acceptor in catalysis.

Belongs to the triosephosphate isomerase family.

It catalyses the reaction L-erythrulose 1-phosphate = D-erythrulose 4-phosphate. Its pathway is carbohydrate metabolism. Involved in catabolism of D-apiose. Catalyzes the isomerization of L-erythrulose 1-phosphate to D-erythrulose 4-phosphate. This chain is L-erythrulose-1-phosphate isomerase, found in Pectobacterium atrosepticum (strain SCRI 1043 / ATCC BAA-672) (Erwinia carotovora subsp. atroseptica).